Here is an 87-residue protein sequence, read N- to C-terminus: Keratin-associated protein 19-3 (87 aa).

Residues 9 to 82 (GGLGYGYGSF…RRPSCCGGYG (74 aa)) form a 23 X 2 AA repeats of G-[YCGS] region.

It belongs to the KRTAP type 19 family. As to quaternary structure, interacts with hair keratins. As to expression, strong expression in narrowly defined pattern restricted to the lower and middle cortical regions of the hair shaft in both developing and cycling hair. During hair follicle regression (catagen), expression levels decrease until expression is no longer detectable in follicles at resting stage (telogen).

In the hair cortex, hair keratin intermediate filaments are embedded in an interfilamentous matrix, consisting of hair keratin-associated proteins (KRTAP), which are essential for the formation of a rigid and resistant hair shaft through their extensive disulfide bond cross-linking with abundant cysteine residues of hair keratins. The matrix proteins include the high-sulfur and high-glycine-tyrosine keratins. The chain is Keratin-associated protein 19-3 (Krtap19-3) from Mus musculus (Mouse).